Reading from the N-terminus, the 71-residue chain is DNA-directed RNA polymerase subunit epsilon (71 aa).

It belongs to the RNA polymerase subunit epsilon family. In terms of assembly, RNAP is composed of a core of 2 alpha, a beta and a beta' subunit. The core is associated with a delta subunit, and at least one of epsilon or omega. When a sigma factor is associated with the core the holoenzyme is formed, which can initiate transcription.

It catalyses the reaction RNA(n) + a ribonucleoside 5'-triphosphate = RNA(n+1) + diphosphate. In terms of biological role, a non-essential component of RNA polymerase (RNAP). The protein is DNA-directed RNA polymerase subunit epsilon of Staphylococcus saprophyticus subsp. saprophyticus (strain ATCC 15305 / DSM 20229 / NCIMB 8711 / NCTC 7292 / S-41).